A 574-amino-acid polypeptide reads, in one-letter code: MAEHEEQPYEGNGNGGDPAPASAYAEYPAPEGSPPAAAAKPTGFSDGATDGGRSQHETQPHDGRSSKSRERERERDKDKERDRDRDRDRRDRDRGDKDRDRDRHREHRDRSERREHHDRERSDDRDRRRGHDSERRRDRDRDGHRRHRSRSRSPSKGRDRRSRSRSRSRSSKRVSGFDQGPQAAIPALAAGAAPGQVPVVAPAISGMLPNMFNLTQTPFTPLVIQPQAMTQQATRHARRVYVGGLPPTANEHTVAVYFNQVMAAVGGNTAGPGDAVLNVYINHDKKFAFVEMRSVEEASNAMALDGIMFEGAPVKVRRPTDYNPSLAAALGPSQPNPNLNLAAVGLTPGSAGGLEGPDRIFVGGLPYYFTEAQVRELLESFGPLRGFDLVKDRETGNSKGYAFCVYQDLNVTDIACAALNGIKMGDKTLTVRRANQGASQPRPEQESMLLHVQQQAQMQKLMFQVGGGALPTKVVCLTQVVSPDELRDDEEYEDIVQDMREEGCRYGNLVKVVIPRPDPSGAPVAGVGRVFLEFADVESSTKAKNGMHGRKFANNQVVAVFYPEDKFAEGQYDG.

The tract at residues 1 to 180 (MAEHEEQPYE…SKRVSGFDQG (180 aa)) is disordered. Low complexity predominate over residues 18 to 41 (PAPASAYAEYPAPEGSPPAAAAKP). Over residues 53 to 143 (RSQHETQPHD…ERRRDRDRDG (91 aa)) the composition is skewed to basic and acidic residues. The span at 144-172 (HRRHRSRSRSPSKGRDRRSRSRSRSRSSK) shows a compositional bias: basic residues. 3 RRM domains span residues 238 to 321 (RRVY…RPTD), 358 to 436 (DRIF…RANQ), and 479 to 565 (QVVS…YPED).

It belongs to the splicing factor SR family.

It is found in the nucleus. Necessary for the splicing of pre-mRNA. The sequence is that of Splicing factor U2af large subunit A (U2AF65A) from Oryza sativa subsp. japonica (Rice).